The primary structure comprises 61 residues: Small ribosomal subunit protein uS14 (61 aa).

Zn(2+)-binding residues include Cys24, Cys27, Cys40, and Cys43.

Belongs to the universal ribosomal protein uS14 family. Zinc-binding uS14 subfamily. In terms of assembly, part of the 30S ribosomal subunit. Contacts proteins S3 and S10. It depends on Zn(2+) as a cofactor.

Its function is as follows. Binds 16S rRNA, required for the assembly of 30S particles and may also be responsible for determining the conformation of the 16S rRNA at the A site. The protein is Small ribosomal subunit protein uS14 of Desulforamulus reducens (strain ATCC BAA-1160 / DSM 100696 / MI-1) (Desulfotomaculum reducens).